The following is a 78-amino-acid chain: Translation initiation factor IF-1, chloroplastic (78 aa).

The 72-residue stretch at 1–72 folds into the S1-like domain; sequence MKKQKLIDME…TKGRITYRFH (72 aa).

Belongs to the IF-1 family. In terms of assembly, component of the 30S ribosomal translation pre-initiation complex which assembles on the 30S ribosome in the order IF-2 and IF-3, IF-1 and N-formylmethionyl-tRNA(fMet); mRNA recruitment can occur at any time during PIC assembly.

Its subcellular location is the plastid. The protein localises to the chloroplast. In terms of biological role, one of the essential components for the initiation of protein synthesis. Stabilizes the binding of IF-2 and IF-3 on the 30S subunit to which N-formylmethionyl-tRNA(fMet) subsequently binds. Helps modulate mRNA selection, yielding the 30S pre-initiation complex (PIC). Upon addition of the 50S ribosomal subunit IF-1, IF-2 and IF-3 are released leaving the mature 70S translation initiation complex. This Huperzia lucidula (Shining clubmoss) protein is Translation initiation factor IF-1, chloroplastic.